Consider the following 497-residue polypeptide: Serine hydroxymethyltransferase (497 aa).

(6S)-5,6,7,8-tetrahydrofolate contacts are provided by residues L176 and G180 to L182. K289 carries the N6-(pyridoxal phosphate)lysine modification.

This sequence belongs to the SHMT family. As to quaternary structure, homodimer. It depends on pyridoxal 5'-phosphate as a cofactor.

It is found in the cytoplasm. The catalysed reaction is (6R)-5,10-methylene-5,6,7,8-tetrahydrofolate + glycine + H2O = (6S)-5,6,7,8-tetrahydrofolate + L-serine. It participates in one-carbon metabolism; tetrahydrofolate interconversion. The protein operates within amino-acid biosynthesis; glycine biosynthesis; glycine from L-serine: step 1/1. Functionally, catalyzes the reversible interconversion of serine and glycine with tetrahydrofolate (THF) serving as the one-carbon carrier. This reaction serves as the major source of one-carbon groups required for the biosynthesis of purines, thymidylate, methionine, and other important biomolecules. Also exhibits THF-independent aldolase activity toward beta-hydroxyamino acids, producing glycine and aldehydes, via a retro-aldol mechanism. In Chlamydia abortus (strain DSM 27085 / S26/3) (Chlamydophila abortus), this protein is Serine hydroxymethyltransferase.